We begin with the raw amino-acid sequence, 208 residues long: MQKTELDDQKLVEEIARRIREILELLGENPEREGLKETPERVAKALLEMTSGLRTPPPQIKVFSLGEDGEVYEKNQIVLIKDVNFSSLCEHHMLPIIGKIHVAYIVSNSGKVAGFSKIIRIVNYYSSRLQIQERLVEQIADAIMNSEIKPKGVMVIGNAIHMCSYVRGVKDKEAKLVSVAYRGLFKTNRALQNHVFRLLDNANKVNLL.

The Zn(2+) site is built by cysteine 89, histidine 92, and cysteine 163.

Belongs to the GTP cyclohydrolase I family. In terms of assembly, homomer.

The catalysed reaction is GTP + H2O = 7,8-dihydroneopterin 3'-triphosphate + formate + H(+). Its pathway is cofactor biosynthesis; 7,8-dihydroneopterin triphosphate biosynthesis; 7,8-dihydroneopterin triphosphate from GTP: step 1/1. This Saccharolobus islandicus (strain L.S.2.15 / Lassen #1) (Sulfolobus islandicus) protein is GTP cyclohydrolase 1.